A 245-amino-acid polypeptide reads, in one-letter code: tRNA (guanine-N(1)-)-methyltransferase (245 aa).

Residues G111 and 131-136 (MGDYVL) contribute to the S-adenosyl-L-methionine site.

The protein belongs to the RNA methyltransferase TrmD family. In terms of assembly, homodimer.

Its subcellular location is the cytoplasm. The catalysed reaction is guanosine(37) in tRNA + S-adenosyl-L-methionine = N(1)-methylguanosine(37) in tRNA + S-adenosyl-L-homocysteine + H(+). Functionally, specifically methylates guanosine-37 in various tRNAs. The polypeptide is tRNA (guanine-N(1)-)-methyltransferase (Staphylococcus epidermidis (strain ATCC 35984 / DSM 28319 / BCRC 17069 / CCUG 31568 / BM 3577 / RP62A)).